The following is a 1426-amino-acid chain: Epidermal growth factor receptor (1426 aa).

The signal sequence occupies residues 1–30 (MLLRRRNGPCPFPLLLLLLAHCICIWPASA). Topologically, residues 31-868 (ARDRYARQNN…SKITANLDVN (838 aa)) are extracellular. Residues N128, N241, N419, N443, N482, N569, N599, N617, N816, N823, and N828 are each glycosylated (N-linked (GlcNAc...) asparagine). The helical transmembrane segment at 869–889 (MIFIITGAVLVPTICILCVVT) threads the bilayer. At 890–1426 (YICRQKQKAK…HRNRNTETRV (537 aa)) the chain is on the cytoplasmic side. T902 is subject to Phosphothreonine; by PKC. Positions 938-1198 (LRKGGVLGMG…QLTTVFAEFA (261 aa)) constitute a Protein kinase domain. ATP-binding positions include 944–952 (LGMGAFGRV) and K971. D1063 (proton acceptor) is an active-site residue. Residues 1232–1297 (PTTDGSEAIA…DSSAREVGVG (66 aa)) form a disordered region. Residues 1257–1276 (HRTDCTDEMPKLNRYCKDPS) show a composition bias toward basic and acidic residues. Y1310 carries the phosphotyrosine; by autocatalysis modification.

Belongs to the protein kinase superfamily. Tyr protein kinase family. EGF receptor subfamily. Homodimer. Binding of the ligand spitz triggers homodimerization of the receptor however, it is able to form dimers, albeit weakly, in the absence of spitz. Interacts (when phosphorylated on tyrosine residues) with Vav (via SH2 domain). Interacts (when ubiquitinated) with Graf. May interact (when phosphorylated) with EGFRAP (via SH2 domain). Ubiquitination by Cbl in response to high spi, promotes its interaction with Graf and thus facilitates its GPI-enriched endocytic compartment (GEEC) mediated endocytosis and its subsequent degradation. In terms of tissue distribution, ubiquitously expressed in embryos. In larvae, uniform expression is seen in wing disks, genital disk, anlagen of testis and ovary, and brain cortex. In eye-antenna disk, highest expression is anterior to morphogenetic furrow, levels remain high in photoreceptor precursor cells. This pattern is reversed in posterior eye disk. In adults expression is high in brain cortex and thoracic and abdominal ganglia.

Its subcellular location is the membrane. It carries out the reaction L-tyrosyl-[protein] + ATP = O-phospho-L-tyrosyl-[protein] + ADP + H(+). Receptor tyrosine kinase, binding ligands of the EGF family and activating several signaling cascades to convert extracellular cues into appropriate cellular responses. Known ligands include spitz, gurken, vein and giant-lens. Transduces the signal through the ras-raf-MAPK pathway. Critical for the proliferation of imaginal tissues, and for the determination of both the antero-posterior and dorso-ventral polarities of the oocyte. In the embryo, plays a role in the establishment of ventral cell fates, maintenance of amnioserosa and ventral neuroectodermal cells, germ band retraction, cell fate specification in the central nervous system, and production and repair of the cuticle. During dorsal closure (DC) functions with the dpp- and ACK-signaling pathways to regulate expression of the myosin zip in the embryonic epidermis and amnioserosa (AS), and thus coordinate the progression of epidermal cell shape changes required for correct DC. In the embryonic epidermis, functions by negatively regulating dpp and consequently the dpp-dependent expression of the myosin zip. In the AS, negatively regulates the production/ and or secretion of a diffusible signal which, is produced by the ACK-signaling pathway, and acts in the AS and epidermal cells to promote zip expression. Also required in the AS to inhibit or delay apoptosis, and consequently slow the rate of DC. Therefore functions at multiple levels to negatively regulate morphogenesis during DC, suggesting that it acts as a general brake mechanism for adjusting the rate of dorsal closure to ensure that closure proceeds smoothly and without loss of epidermal integrity. During oogenesis, one of two tyrosine kinase chemoattractant receptors (Egfr and Pvr), that function in the border cells (BC) to detect guidance cues from the oocyte and transduce this information to the guidance pathway that regulate the collective migration of the BC cluster through the nurse cells to the oocyte. The protein is Epidermal growth factor receptor (Egfr) of Drosophila melanogaster (Fruit fly).